The sequence spans 493 residues: Bifunctional protein GlmU (493 aa).

A pyrophosphorylase region spans residues 1–246 (MTGELDVDGE…SWLVAGINDR (246 aa)). Residues 21 to 24 (LAAG), Lys-35, Gln-88, 93 to 94 (GT), 117 to 119 (SGD), Gly-156, Glu-171, Asn-186, and Asn-244 each bind UDP-N-acetyl-alpha-D-glucosamine. Asp-119 serves as a coordination point for Mg(2+). Mg(2+) is bound at residue Asn-244. The segment at 247–267 (VQLTAAATELNARIIRRWQLA) is linker. The tract at residues 268 to 493 (GVTIHDPRTT…DGPADDASDA (226 aa)) is N-acetyltransferase. Residues Arg-349 and Lys-367 each coordinate UDP-N-acetyl-alpha-D-glucosamine. Residue His-379 is the Proton acceptor of the active site. Tyr-382 and Asn-393 together coordinate UDP-N-acetyl-alpha-D-glucosamine. Acetyl-CoA contacts are provided by residues Ala-396, 402-403 (NY), Ser-421, and Ala-439. Residues 470–493 (RPGTPEARAAVEAADGPADDASDA) are disordered.

In the N-terminal section; belongs to the N-acetylglucosamine-1-phosphate uridyltransferase family. This sequence in the C-terminal section; belongs to the transferase hexapeptide repeat family. In terms of assembly, homotrimer. Requires Mg(2+) as cofactor.

It is found in the cytoplasm. It carries out the reaction alpha-D-glucosamine 1-phosphate + acetyl-CoA = N-acetyl-alpha-D-glucosamine 1-phosphate + CoA + H(+). The catalysed reaction is N-acetyl-alpha-D-glucosamine 1-phosphate + UTP + H(+) = UDP-N-acetyl-alpha-D-glucosamine + diphosphate. Its pathway is nucleotide-sugar biosynthesis; UDP-N-acetyl-alpha-D-glucosamine biosynthesis; N-acetyl-alpha-D-glucosamine 1-phosphate from alpha-D-glucosamine 6-phosphate (route II): step 2/2. It functions in the pathway nucleotide-sugar biosynthesis; UDP-N-acetyl-alpha-D-glucosamine biosynthesis; UDP-N-acetyl-alpha-D-glucosamine from N-acetyl-alpha-D-glucosamine 1-phosphate: step 1/1. It participates in bacterial outer membrane biogenesis; LPS lipid A biosynthesis. Its function is as follows. Catalyzes the last two sequential reactions in the de novo biosynthetic pathway for UDP-N-acetylglucosamine (UDP-GlcNAc). The C-terminal domain catalyzes the transfer of acetyl group from acetyl coenzyme A to glucosamine-1-phosphate (GlcN-1-P) to produce N-acetylglucosamine-1-phosphate (GlcNAc-1-P), which is converted into UDP-GlcNAc by the transfer of uridine 5-monophosphate (from uridine 5-triphosphate), a reaction catalyzed by the N-terminal domain. This Clavibacter sepedonicus (Clavibacter michiganensis subsp. sepedonicus) protein is Bifunctional protein GlmU.